Here is a 470-residue protein sequence, read N- to C-terminus: Coproporphyrinogen III oxidase (470 aa).

FAD is bound by residues 12-17 (GGGITG), 41-42 (EA), lysine 49, 63-66 (GPDS), valine 256, tryptophan 409, and 448-450 (VGI).

The protein belongs to the protoporphyrinogen/coproporphyrinogen oxidase family. Coproporphyrinogen III oxidase subfamily. In terms of assembly, monomer. Requires FAD as cofactor.

The protein localises to the cytoplasm. Its subcellular location is the cell membrane. The catalysed reaction is coproporphyrinogen III + 3 O2 = coproporphyrin III + 3 H2O2. Its pathway is porphyrin-containing compound metabolism; protoheme biosynthesis. Its activity is regulated as follows. Only weakly inhibited by acifluorfen, in contrast to eukaryotic family members. Weakly inhibited by methylacifluorfen. Bilirubin, biliverdin and hemin are all competitive inhibitors. Its function is as follows. Involved in coproporphyrin-dependent heme b biosynthesis. Catalyzes the oxidation of coproporphyrinogen III to coproporphyrin III. Can also oxidize protoporphyrinogen IX to protoporphyrin-IX. The specific activity for the oxidation of coproporphyrinogen III is much higher than that for the oxidation of protoporphyrinogen IX. Can also oxidize mesoporphyrinogen IX, but not uroporphyrinogen III. This chain is Coproporphyrinogen III oxidase, found in Bacillus subtilis (strain 168).